The chain runs to 509 residues: DNA nucleotidylexotransferase (509 aa).

The tract at residues methionine 1–alanine 24 is disordered. A Nuclear localization signal motif is present at residues proline 11–arginine 17. The 98-residue stretch at proline 27 to glutamine 124 folds into the BRCT domain. Phosphoserine is present on serine 134. Positions serine 151–alanine 509 are mediates interaction with DNTTIP2. The involved in DNA binding stretch occupies residues valine 258–threonine 262. A 2'-deoxyribonucleoside 5'-triphosphate contacts are provided by residues glycine 333 to lysine 338 and histidine 342 to aspartate 345. 3 residues coordinate Mg(2+): aspartate 343, aspartate 345, and aspartate 433. Glycine 448 to tryptophan 449 contributes to the a 2'-deoxyribonucleoside 5'-triphosphate binding site.

Belongs to the DNA polymerase type-X family. In terms of assembly, interacts with PRP19 and DNTTIP1. Forms a ternary complex with DNTTIP2 and core histone. Released from this complex by PCNA. Interacts with TRERF1. Mg(2+) is required as a cofactor.

The protein localises to the nucleus. The catalysed reaction is DNA(n) + a 2'-deoxyribonucleoside 5'-triphosphate = DNA(n+1) + diphosphate. Its function is as follows. Template-independent DNA polymerase which catalyzes the random addition of deoxynucleoside 5'-triphosphate to the 3'-end of a DNA initiator. One of the in vivo functions of this enzyme is the addition of nucleotides at the junction (N region) of rearranged Ig heavy chain and T-cell receptor gene segments during the maturation of B- and T-cells. This Homo sapiens (Human) protein is DNA nucleotidylexotransferase (DNTT).